The sequence spans 142 residues: Deoxyuridine 5'-triphosphate nucleotidohydrolase (142 aa).

Substrate-binding positions include 62–64, Asn75, and 79–81; these read RSG and TID.

Belongs to the dUTPase family. Requires Mg(2+) as cofactor.

It carries out the reaction dUTP + H2O = dUMP + diphosphate + H(+). The protein operates within pyrimidine metabolism; dUMP biosynthesis; dUMP from dCTP (dUTP route): step 2/2. This enzyme is involved in nucleotide metabolism: it produces dUMP, the immediate precursor of thymidine nucleotides and it decreases the intracellular concentration of dUTP so that uracil cannot be incorporated into DNA. This Clostridium novyi (strain NT) protein is Deoxyuridine 5'-triphosphate nucleotidohydrolase.